The following is a 717-amino-acid chain: MAGKRENFVRVDDLDSRLPSSSVAFQQNYASNFSGQLHPIHASNETSRSFKKGIQKGSKGLKSIGRSLGFGVYRAVFPEDLKVSEKKIFDPQDKFLLYCNKLFVASCILSVFVDPFFFYLPVINAESKCLGIDRKLAITASTLRTFIDVFYLAHMALQLRTAYIAPSSRVFGRGELVIDPAQIAKRYLQRWFIIDFLSVLPLPQIVVWRFLQSSNGSDVLATKQALLFIVLVQYIPRFLRVLPLTSELKRTAGVFAETAWAGAAYYLLLYMLASHIVGAFWYLLALERNDACWQEACIDAGNCSTDFLYCGNQNMDGYAVWNRAKESVLKSKCRADLDDNNPPFDFGIYTQALSSGIVSSQNFIVKYCYCLWWGLQNLSTLGQGLETSTYPMEIIFSISLAISGLILFALLIGNMQTYLQSLTIRLEEMRVKRRDSEQWMHHRMLPQDLRERVRRYDQYKWLETRGVDEEYLVQNLPKDLRRDIKRHLCLALVRRVPLFKSMDDKLLDAICMRLKPCLFTESTYLVREGDPVDEMLFIIRGRLESVTTDGGRSGFFNRSLLKEGEFCGEELLTWALDPKSGVNLPSSTRTVKALTEVEAFALTSEELKFVASQFRRLHSRQVQHTFRFYSHQWRTWAACFIQAAWRRYCKRKKMEEAEAEAAAVSSSTAGPSYSIGAAFLATKFAANALRTIHRNRNTKIRDLVKLQKPPEPDFTAD.

The Cytoplasmic portion of the chain corresponds to 1–102; the sequence is MAGKRENFVR…DKFLLYCNKL (102 aa). Residues 103-123 traverse the membrane as a helical segment; sequence FVASCILSVFVDPFFFYLPVI. The Extracellular portion of the chain corresponds to 124 to 136; sequence NAESKCLGIDRKL. Residues 137–157 form a helical membrane-spanning segment; sequence AITASTLRTFIDVFYLAHMAL. Residues 158–190 lie on the Cytoplasmic side of the membrane; sequence QLRTAYIAPSSRVFGRGELVIDPAQIAKRYLQR. Residues 191–211 form a helical membrane-spanning segment; sequence WFIIDFLSVLPLPQIVVWRFL. Residues 212 to 224 are Extracellular-facing; the sequence is QSSNGSDVLATKQ. A helical membrane pass occupies residues 225-245; that stretch reads ALLFIVLVQYIPRFLRVLPLT. The Cytoplasmic segment spans residues 246-265; sequence SELKRTAGVFAETAWAGAAY. A helical transmembrane segment spans residues 266–286; the sequence is YLLLYMLASHIVGAFWYLLAL. The Extracellular portion of the chain corresponds to 287-391; the sequence is ERNDACWQEA…GQGLETSTYP (105 aa). The helical transmembrane segment at 392 to 412 threads the bilayer; sequence MEIIFSISLAISGLILFALLI. Topologically, residues 413–717 are cytoplasmic; it reads GNMQTYLQSL…KPPEPDFTAD (305 aa). A nucleoside 3',5'-cyclic phosphate is bound by residues 498–628 and glutamate 569; that span reads LFKS…TFRF. The interval 614–629 is calmodulin-binding; sequence FRRLHSRQVQHTFRFY. Positions 634 to 663 constitute an IQ domain; the sequence is RTWAACFIQAAWRRYCKRKKMEEAEAEAAA.

This sequence belongs to the cyclic nucleotide-gated cation channel (TC 1.A.1.5) family. In terms of assembly, homotetramer or heterotetramer.

The protein resides in the cell membrane. Functionally, probable cyclic nucleotide-gated ion channel. The chain is Probable cyclic nucleotide-gated ion channel 5 (CNGC5) from Arabidopsis thaliana (Mouse-ear cress).